A 217-amino-acid chain; its full sequence is Serine acetyltransferase (217 aa).

Belongs to the transferase hexapeptide repeat family.

Its subcellular location is the cytoplasm. It carries out the reaction L-serine + acetyl-CoA = O-acetyl-L-serine + CoA. Its pathway is amino-acid biosynthesis; L-cysteine biosynthesis; L-cysteine from L-serine: step 1/2. Its activity is regulated as follows. Inhibited by cysteine. Its function is as follows. Catalyzes the acetylation of serine by acetyl-CoA to produce O-acetylserine (OAS). The sequence is that of Serine acetyltransferase (cysE) from Bacillus subtilis (strain 168).